The primary structure comprises 585 residues: Glutamate decarboxylase 2 (585 aa).

Residues 1-25 (MASPGSGFWSFGSEDGSGDPENPST) are disordered. Phosphoserine occurs at positions 3, 6, 10, and 13. 2 S-palmitoyl cysteine lipidation sites follow: Cys30 and Cys45. Position 181–183 (181–183 (QLS)) interacts with substrate. At Lys396 the chain carries N6-(pyridoxal phosphate)lysine. Arg558 lines the substrate pocket.

Belongs to the group II decarboxylase family. In terms of assembly, homodimer. The cofactor is pyridoxal 5'-phosphate. Post-translationally, phosphorylated; which does not affect kinetic parameters or subcellular location. In terms of processing, palmitoylated; which is required for presynaptic clustering.

The protein resides in the cytoplasm. The protein localises to the cytosol. It is found in the cytoplasmic vesicle. Its subcellular location is the presynaptic cell membrane. It localises to the golgi apparatus membrane. It carries out the reaction L-glutamate + H(+) = 4-aminobutanoate + CO2. Functionally, catalyzes the production of GABA. In Canis lupus familiaris (Dog), this protein is Glutamate decarboxylase 2 (GAD2).